A 167-amino-acid chain; its full sequence is Intermembrane phospholipid transport system binding protein MlaD (167 aa).

Residues 1–6 (MRQTIK) are Cytoplasmic-facing. Residues 7–27 (YEFWVGLFLLLGIGALVFLGL) form a helical; Signal-anchor for type II membrane protein membrane-spanning segment. Residues 28–167 (RVANVQGFAE…GNEKSESTEQ (140 aa)) are Periplasmic-facing. Residues 40 to 118 (SYTVTATFDN…GEQYIALTMG (79 aa)) form an MCE/MlaD region.

It belongs to the MlaD family. In terms of assembly, the complex is composed of two ATP-binding proteins (MlaF), two transmembrane proteins (MlaE), two cytoplasmic solute-binding proteins (MlaB) and six periplasmic solute-binding proteins (MlaD).

The protein localises to the cell inner membrane. Its function is as follows. Part of the ABC transporter complex MlaFEDB, which is involved in a phospholipid transport pathway that maintains lipid asymmetry in the outer membrane by retrograde trafficking of phospholipids from the outer membrane to the inner membrane. MlaD functions in substrate binding with strong affinity for phospholipids and modulates ATP hydrolytic activity of the complex. This chain is Intermembrane phospholipid transport system binding protein MlaD, found in Haemophilus influenzae (strain ATCC 51907 / DSM 11121 / KW20 / Rd).